Here is a 247-residue protein sequence, read N- to C-terminus: 2,3-bisphosphoglycerate-dependent phosphoglycerate mutase (247 aa).

Substrate contacts are provided by residues 8 to 15 (RHGESTWN), 21 to 22 (TG), Arg-60, 87 to 90 (ERHY), Lys-98, 114 to 115 (RR), and 183 to 184 (GN). His-9 serves as the catalytic Tele-phosphohistidine intermediate. Glu-87 functions as the Proton donor/acceptor in the catalytic mechanism.

Belongs to the phosphoglycerate mutase family. BPG-dependent PGAM subfamily. In terms of assembly, homodimer.

The catalysed reaction is (2R)-2-phosphoglycerate = (2R)-3-phosphoglycerate. It participates in carbohydrate degradation; glycolysis; pyruvate from D-glyceraldehyde 3-phosphate: step 3/5. Catalyzes the interconversion of 2-phosphoglycerate and 3-phosphoglycerate. This chain is 2,3-bisphosphoglycerate-dependent phosphoglycerate mutase, found in Paracidovorax citrulli (strain AAC00-1) (Acidovorax citrulli).